The chain runs to 136 residues: Small ribosomal subunit protein bS6 (136 aa).

The tract at residues 99 to 136 is disordered; the sequence is QSEMLKAEENRSERRERRERPEHGGHEGLDGDSDKADE. The segment covering 103–136 has biased composition (basic and acidic residues); the sequence is LKAEENRSERRERRERPEHGGHEGLDGDSDKADE.

This sequence belongs to the bacterial ribosomal protein bS6 family.

In terms of biological role, binds together with bS18 to 16S ribosomal RNA. The sequence is that of Small ribosomal subunit protein bS6 from Azotobacter vinelandii (strain DJ / ATCC BAA-1303).